The primary structure comprises 486 residues: Betaine aldehyde dehydrogenase (486 aa).

Thr23 and Asp90 together coordinate K(+). Residue 147–149 coordinates NAD(+); it reads GAW. Lys159 functions as the Charge relay system in the catalytic mechanism. Residues 173–176 and 226–229 contribute to the NAD(+) site; these read KPSE and ESGT. Leu241 provides a ligand contact to K(+). The Proton acceptor role is filled by Glu247. 3 residues coordinate NAD(+): Gly249, Cys281, and Glu382. The active-site Nucleophile is Cys281. Residue Cys281 is modified to Cysteine sulfenic acid (-SOH). K(+)-binding residues include Lys452 and Gly455. The Charge relay system role is filled by Glu459.

The protein belongs to the aldehyde dehydrogenase family. Dimer of dimers. K(+) is required as a cofactor.

It carries out the reaction betaine aldehyde + NAD(+) + H2O = glycine betaine + NADH + 2 H(+). The protein operates within amine and polyamine biosynthesis; betaine biosynthesis via choline pathway; betaine from betaine aldehyde: step 1/1. Its function is as follows. Involved in the biosynthesis of the osmoprotectant glycine betaine. Catalyzes the irreversible oxidation of betaine aldehyde to the corresponding acid. The sequence is that of Betaine aldehyde dehydrogenase from Vibrio vulnificus (strain CMCP6).